The following is a 304-amino-acid chain: Homoserine kinase (304 aa).

Residue 90–100 coordinates ATP; sequence PLARGLGSSAS.

Belongs to the GHMP kinase family. Homoserine kinase subfamily.

The protein localises to the cytoplasm. The enzyme catalyses L-homoserine + ATP = O-phospho-L-homoserine + ADP + H(+). Its pathway is amino-acid biosynthesis; L-threonine biosynthesis; L-threonine from L-aspartate: step 4/5. Its function is as follows. Catalyzes the ATP-dependent phosphorylation of L-homoserine to L-homoserine phosphate. The chain is Homoserine kinase from Staphylococcus aureus (strain MSSA476).